Reading from the N-terminus, the 141-residue chain is ATP synthase epsilon chain (141 aa).

This sequence belongs to the ATPase epsilon chain family. As to quaternary structure, F-type ATPases have 2 components, CF(1) - the catalytic core - and CF(0) - the membrane proton channel. CF(1) has five subunits: alpha(3), beta(3), gamma(1), delta(1), epsilon(1). CF(0) has three main subunits: a, b and c.

It is found in the cell inner membrane. Produces ATP from ADP in the presence of a proton gradient across the membrane. The chain is ATP synthase epsilon chain from Azoarcus sp. (strain BH72).